Consider the following 991-residue polypeptide: Integrator complex subunit 10-like protein (991 aa).

5 disordered regions span residues 180-217, 310-345, 462-484, 549-614, and 961-991; these read NNNN…NNNN, YFDE…DIEK, NDYF…SQES, NSSS…GQQP, and EKQY…EMNE. A compositionally biased stretch (low complexity) spans 319–333; it reads KQQQQQQQQQQQQEQ. Over residues 473-484 the composition is skewed to acidic residues; the sequence is GGDENDENSQES. The segment covering 549-609 has biased composition (low complexity); that stretch reads NSSSGSNGII…NNNNNNNNNN (61 aa). Positions 964–991 are enriched in polar residues; sequence YSSSNTANNSGVNNSPIHNQNTDVEMNE.

It is found in the nucleus. Functionally, may be a component of the Integrator complex, a complex involved in the small nuclear RNAs (snRNA) U1 and U2 transcription and in their 3'-box-dependent processing. The sequence is that of Integrator complex subunit 10-like protein from Dictyostelium discoideum (Social amoeba).